The primary structure comprises 366 residues: Phospho-N-acetylmuramoyl-pentapeptide-transferase (366 aa).

The next 10 helical transmembrane spans lie at 3–23, 55–75, 80–100, 118–138, 161–181, 197–217, 235–255, 262–282, 287–307, and 341–361; these read QIFI…PVLI, IAIL…GLVF, PGVS…VGFA, AKLI…LQFP, IAVG…NIVI, LASG…FWQF, PLDL…FLWW, IFMG…LSIT, LLMI…VIQV, and FWLL…GEWL.

This sequence belongs to the glycosyltransferase 4 family. MraY subfamily. It depends on Mg(2+) as a cofactor.

The protein resides in the cell membrane. The enzyme catalyses UDP-N-acetyl-alpha-D-muramoyl-L-alanyl-gamma-D-glutamyl-meso-2,6-diaminopimeloyl-D-alanyl-D-alanine + di-trans,octa-cis-undecaprenyl phosphate = di-trans,octa-cis-undecaprenyl diphospho-N-acetyl-alpha-D-muramoyl-L-alanyl-D-glutamyl-meso-2,6-diaminopimeloyl-D-alanyl-D-alanine + UMP. It functions in the pathway cell wall biogenesis; peptidoglycan biosynthesis. Its function is as follows. Catalyzes the initial step of the lipid cycle reactions in the biosynthesis of the cell wall peptidoglycan: transfers peptidoglycan precursor phospho-MurNAc-pentapeptide from UDP-MurNAc-pentapeptide onto the lipid carrier undecaprenyl phosphate, yielding undecaprenyl-pyrophosphoryl-MurNAc-pentapeptide, known as lipid I. This is Phospho-N-acetylmuramoyl-pentapeptide-transferase from Corynebacterium urealyticum (strain ATCC 43042 / DSM 7109).